The primary structure comprises 144 residues: D-aminoacyl-tRNA deacylase (144 aa).

Positions 136 to 137 (GP) match the Gly-cisPro motif, important for rejection of L-amino acids motif.

Belongs to the DTD family. As to quaternary structure, homodimer.

The protein localises to the cytoplasm. The enzyme catalyses glycyl-tRNA(Ala) + H2O = tRNA(Ala) + glycine + H(+). It catalyses the reaction a D-aminoacyl-tRNA + H2O = a tRNA + a D-alpha-amino acid + H(+). An aminoacyl-tRNA editing enzyme that deacylates mischarged D-aminoacyl-tRNAs. Also deacylates mischarged glycyl-tRNA(Ala), protecting cells against glycine mischarging by AlaRS. Acts via tRNA-based rather than protein-based catalysis; rejects L-amino acids rather than detecting D-amino acids in the active site. By recycling D-aminoacyl-tRNA to D-amino acids and free tRNA molecules, this enzyme counteracts the toxicity associated with the formation of D-aminoacyl-tRNA entities in vivo and helps enforce protein L-homochirality. This Actinobacillus pleuropneumoniae serotype 5b (strain L20) protein is D-aminoacyl-tRNA deacylase.